The sequence spans 93 residues: NADH-ubiquinone oxidoreductase chain 4L (93 aa).

The next 3 helical transmembrane spans lie at 3–23, 27–47, and 55–75; these read LTIL…GPLG, IIKL…LIIL, and ILGL…SAIG.

Belongs to the complex I subunit 4L family.

The protein resides in the mitochondrion membrane. The catalysed reaction is a ubiquinone + NADH + 5 H(+)(in) = a ubiquinol + NAD(+) + 4 H(+)(out). Functionally, core subunit of the mitochondrial membrane respiratory chain NADH dehydrogenase (Complex I) that is believed to belong to the minimal assembly required for catalysis. Complex I functions in the transfer of electrons from NADH to the respiratory chain. The immediate electron acceptor for the enzyme is believed to be ubiquinone. This Wickerhamomyces canadensis (Yeast) protein is NADH-ubiquinone oxidoreductase chain 4L (ND4L).